The chain runs to 146 residues: Catabolic 3-dehydroquinase (146 aa).

Y24 (proton acceptor) is an active-site residue. Residues N78, H84, and D91 each coordinate substrate. H104 acts as the Proton donor in catalysis. Residues 105–106 (IT) and R115 contribute to the substrate site.

Belongs to the type-II 3-dehydroquinase family. As to quaternary structure, homododecamer. Adopts a ring-like structure, composed of an arrangement of two hexameric rings stacked on top of one another.

The catalysed reaction is 3-dehydroquinate = 3-dehydroshikimate + H2O. It functions in the pathway aromatic compound metabolism; 3,4-dihydroxybenzoate biosynthesis; 3,4-dihydroxybenzoate from 3-dehydroquinate: step 1/2. In terms of biological role, is involved in the catabolism of quinate. Allows the utilization of quinate as carbon source via the beta-ketoadipate pathway. The polypeptide is Catabolic 3-dehydroquinase (Meyerozyma guilliermondii (strain ATCC 6260 / CBS 566 / DSM 6381 / JCM 1539 / NBRC 10279 / NRRL Y-324) (Yeast)).